Here is a 130-residue protein sequence, read N- to C-terminus: Small ribosomal subunit protein uS9 (130 aa).

Belongs to the universal ribosomal protein uS9 family.

The chain is Small ribosomal subunit protein uS9 from Pseudomonas fluorescens (strain Pf0-1).